A 242-amino-acid chain; its full sequence is 1-(5-phosphoribosyl)-5-[(5-phosphoribosylamino)methylideneamino] imidazole-4-carboxamide isomerase (242 aa).

Residue aspartate 8 is the Proton acceptor of the active site. Aspartate 129 (proton donor) is an active-site residue.

Belongs to the HisA/HisF family.

It localises to the cytoplasm. It catalyses the reaction 1-(5-phospho-beta-D-ribosyl)-5-[(5-phospho-beta-D-ribosylamino)methylideneamino]imidazole-4-carboxamide = 5-[(5-phospho-1-deoxy-D-ribulos-1-ylimino)methylamino]-1-(5-phospho-beta-D-ribosyl)imidazole-4-carboxamide. Its pathway is amino-acid biosynthesis; L-histidine biosynthesis; L-histidine from 5-phospho-alpha-D-ribose 1-diphosphate: step 4/9. The chain is 1-(5-phosphoribosyl)-5-[(5-phosphoribosylamino)methylideneamino] imidazole-4-carboxamide isomerase from Clostridium botulinum (strain Kyoto / Type A2).